Consider the following 579-residue polypeptide: Deleted in azoospermia protein 4 (579 aa).

Residues 1 to 10 (MSAANPETPN) are compositionally biased toward polar residues. A disordered region spans residues 1–27 (MSAANPETPNSTISREASTQSSSAAAS). Residues 11–27 (STISREASTQSSSAAAS) are compositionally biased toward low complexity. An RRM 1 domain is found at 40-115 (NTVFVGGIDA…KKLKLGPAIR (76 aa)). The segment covering 163–175 (QHVQSAANPETPN) has biased composition (polar residues). Residues 163 to 192 (QHVQSAANPETPNSTISREASTQSSSAAAS) are disordered. The segment covering 176–192 (STISREASTQSSSAAAS) has biased composition (low complexity). One can recognise an RRM 2 domain in the interval 205–280 (NTVFVGGIDA…KKLKLGPAIR (76 aa)). DAZ domains are found at residues 332–355 (AYSA…YNYQ), 356–379 (EYPT…YNYQ), 380–403 (PFPA…YNYQ), 404–427 (AFPA…YNYQ), 428–451 (PFPA…YNYQ), 452–475 (AFPA…YNYQ), 476–499 (AFPA…YNYQ), 500–523 (AFPA…YNYQ), and 524–547 (AFPA…YNYQ).

The protein belongs to the RRM DAZ family. In terms of assembly, forms a heterodimer with BOLL and DAZL. Interacts with PUM2, DAZAP1, DAZAP2, DZIP1 and DZIP3. In terms of tissue distribution, testis-specific. Expression restricted to premeiotic germ cells, particularly in spermatogonia (at protein level).

Its subcellular location is the cytoplasm. It is found in the nucleus. Its function is as follows. RNA-binding protein that plays an essential role in spermatogenesis. May act by binding to the 3'-UTR of mRNAs and regulating their translation. The polypeptide is Deleted in azoospermia protein 4 (DAZ4) (Homo sapiens (Human)).